A 352-amino-acid polypeptide reads, in one-letter code: Dihydrorhizobitoxine desaturase (352 aa).

3 consecutive transmembrane segments (helical) span residues 53-73 (LATL…IGAY), 89-109 (LAKN…YPLF), and 204-224 (IGIL…LFWI).

It belongs to the fatty acid desaturase type 1 family.

It is found in the cell inner membrane. It carries out the reaction dihydrorhizobitoxine + 2 reduced [2Fe-2S]-[ferredoxin] + O2 + 2 H(+) = rhizobitoxine + 2 oxidized [2Fe-2S]-[ferredoxin] + 2 H2O. In terms of biological role, involved in the biosynthesis of the nodulation enhancer compound rhizobitoxine. Catalyzes the final step of the pathway, the introduction of a carbon double bond into the C3 position of dihydrorhizobitoxine to produce rhizobitoxine. The chain is Dihydrorhizobitoxine desaturase from Bradyrhizobium elkanii.